The primary structure comprises 327 residues: Phenylalanine--tRNA ligase alpha subunit (327 aa).

Glu-252 contributes to the Mg(2+) binding site.

This sequence belongs to the class-II aminoacyl-tRNA synthetase family. Phe-tRNA synthetase alpha subunit type 1 subfamily. As to quaternary structure, tetramer of two alpha and two beta subunits. It depends on Mg(2+) as a cofactor.

Its subcellular location is the cytoplasm. The catalysed reaction is tRNA(Phe) + L-phenylalanine + ATP = L-phenylalanyl-tRNA(Phe) + AMP + diphosphate + H(+). This is Phenylalanine--tRNA ligase alpha subunit from Cronobacter sakazakii (strain ATCC BAA-894) (Enterobacter sakazakii).